Here is a 332-residue protein sequence, read N- to C-terminus: Alpha/beta hydrolase domain-containing protein aho-3 (332 aa).

Residues 1–15 show a composition bias toward low complexity; it reads MSSGAPSGSSMSSTP. The tract at residues 1–24 is disordered; sequence MSSGAPSGSSMSSTPGSPPPRAGG. Active-site charge relay system residues include Ser-191, Asp-256, and His-285.

It belongs to the AB hydrolase superfamily. ABHD17 family. Palmitoylated on cysteine residues located in a cysteine cluster at the N-terminus which promotes membrane localization and localization to sensory neuron endings. As to expression, expressed in a subset of neurons including AIY, HSN, ADF, AFD, AWC, AWB and NSM, hypodermis, pharyngeal muscle and intestine.

It localises to the cell membrane. The protein localises to the cytoplasmic vesicle membrane. It carries out the reaction S-hexadecanoyl-L-cysteinyl-[protein] + H2O = L-cysteinyl-[protein] + hexadecanoate + H(+). In terms of biological role, hydrolyzes fatty acids from S-acylated cysteine residues in proteins. Acts in sensory neurons including AWC to regulate starvation-induced thermotaxis plasticity and salt learning behavior. The polypeptide is Alpha/beta hydrolase domain-containing protein aho-3 (Caenorhabditis elegans).